We begin with the raw amino-acid sequence, 428 residues long: Diaminopimelate decarboxylase (428 aa).

Lys-64 is modified (N6-(pyridoxal phosphate)lysine). Residues Gly-239 and 281–284 contribute to the pyridoxal 5'-phosphate site; that span reads EPGR. Substrate is bound by residues Arg-284, Arg-319, and Tyr-323. Cys-350 functions as the Proton donor in the catalytic mechanism. Glu-351 and Tyr-379 together coordinate substrate. A pyridoxal 5'-phosphate-binding site is contributed by Tyr-379.

Belongs to the Orn/Lys/Arg decarboxylase class-II family. LysA subfamily. Homodimer. The cofactor is pyridoxal 5'-phosphate.

The enzyme catalyses meso-2,6-diaminopimelate + H(+) = L-lysine + CO2. The protein operates within amino-acid biosynthesis; L-lysine biosynthesis via DAP pathway; L-lysine from DL-2,6-diaminopimelate: step 1/1. Functionally, specifically catalyzes the decarboxylation of meso-diaminopimelate (meso-DAP) to L-lysine. In Methanothermobacter thermautotrophicus (strain ATCC 29096 / DSM 1053 / JCM 10044 / NBRC 100330 / Delta H) (Methanobacterium thermoautotrophicum), this protein is Diaminopimelate decarboxylase.